Consider the following 101-residue polypeptide: Small ribosomal subunit protein uS14 (101 aa).

Belongs to the universal ribosomal protein uS14 family. As to quaternary structure, part of the 30S ribosomal subunit. Contacts proteins S3 and S10.

Binds 16S rRNA, required for the assembly of 30S particles and may also be responsible for determining the conformation of the 16S rRNA at the A site. This is Small ribosomal subunit protein uS14 from Albidiferax ferrireducens (strain ATCC BAA-621 / DSM 15236 / T118) (Rhodoferax ferrireducens).